The primary structure comprises 358 residues: Biotin synthase (358 aa).

In terms of domain architecture, Radical SAM core spans 50–277; that stretch reads NEVQVSTLCS…KSHVRLSAGR (228 aa). 3 residues coordinate [4Fe-4S] cluster: C65, C69, and C72. C109, C140, C200, and R272 together coordinate [2Fe-2S] cluster.

It belongs to the radical SAM superfamily. Biotin synthase family. In terms of assembly, homodimer. [4Fe-4S] cluster is required as a cofactor. [2Fe-2S] cluster serves as cofactor.

The enzyme catalyses (4R,5S)-dethiobiotin + (sulfur carrier)-SH + 2 reduced [2Fe-2S]-[ferredoxin] + 2 S-adenosyl-L-methionine = (sulfur carrier)-H + biotin + 2 5'-deoxyadenosine + 2 L-methionine + 2 oxidized [2Fe-2S]-[ferredoxin]. The protein operates within cofactor biosynthesis; biotin biosynthesis; biotin from 7,8-diaminononanoate: step 2/2. Its function is as follows. Catalyzes the conversion of dethiobiotin (DTB) to biotin by the insertion of a sulfur atom into dethiobiotin via a radical-based mechanism. The sequence is that of Biotin synthase from Cellvibrio japonicus (strain Ueda107) (Pseudomonas fluorescens subsp. cellulosa).